Reading from the N-terminus, the 188-residue chain is ATP synthase subunit b, chloroplastic (188 aa).

A helical transmembrane segment spans residues 35–57; it reads LINLAVVIGVLVYFGKGVLTTLL.

The protein belongs to the ATPase B chain family. In terms of assembly, F-type ATPases have 2 components, F(1) - the catalytic core - and F(0) - the membrane proton channel. F(1) has five subunits: alpha(3), beta(3), gamma(1), delta(1), epsilon(1). F(0) has four main subunits: a(1), b(1), b'(1) and c(10-14). The alpha and beta chains form an alternating ring which encloses part of the gamma chain. F(1) is attached to F(0) by a central stalk formed by the gamma and epsilon chains, while a peripheral stalk is formed by the delta, b and b' chains.

The protein resides in the plastid. Its subcellular location is the chloroplast thylakoid membrane. Its function is as follows. F(1)F(0) ATP synthase produces ATP from ADP in the presence of a proton or sodium gradient. F-type ATPases consist of two structural domains, F(1) containing the extramembraneous catalytic core and F(0) containing the membrane proton channel, linked together by a central stalk and a peripheral stalk. During catalysis, ATP synthesis in the catalytic domain of F(1) is coupled via a rotary mechanism of the central stalk subunits to proton translocation. Component of the F(0) channel, it forms part of the peripheral stalk, linking F(1) to F(0). The chain is ATP synthase subunit b, chloroplastic from Zygnema circumcarinatum (Green alga).